The sequence spans 390 residues: 3-ketoacyl-CoA thiolase (390 aa).

Cysteine 95 acts as the Acyl-thioester intermediate in catalysis. Active-site proton acceptor residues include histidine 346 and cysteine 376.

Belongs to the thiolase-like superfamily. Thiolase family. Heterotetramer of two alpha chains (FadB) and two beta chains (FadA).

It is found in the cytoplasm. It carries out the reaction an acyl-CoA + acetyl-CoA = a 3-oxoacyl-CoA + CoA. It functions in the pathway lipid metabolism; fatty acid beta-oxidation. Functionally, catalyzes the final step of fatty acid oxidation in which acetyl-CoA is released and the CoA ester of a fatty acid two carbons shorter is formed. The protein is 3-ketoacyl-CoA thiolase of Acinetobacter baumannii (strain ATCC 17978 / DSM 105126 / CIP 53.77 / LMG 1025 / NCDC KC755 / 5377).